A 317-amino-acid polypeptide reads, in one-letter code: Ribosomal protein L11 methyltransferase (317 aa).

S-adenosyl-L-methionine-binding residues include threonine 158, glycine 179, aspartate 201, and asparagine 244.

It belongs to the methyltransferase superfamily. PrmA family.

It is found in the cytoplasm. It carries out the reaction L-lysyl-[protein] + 3 S-adenosyl-L-methionine = N(6),N(6),N(6)-trimethyl-L-lysyl-[protein] + 3 S-adenosyl-L-homocysteine + 3 H(+). Functionally, methylates ribosomal protein L11. The sequence is that of Ribosomal protein L11 methyltransferase from Streptococcus pyogenes serotype M6 (strain ATCC BAA-946 / MGAS10394).